A 286-amino-acid chain; its full sequence is General stress protein 39 (286 aa).

A disordered region spans residues 1–26; that stretch reads MANYPKELPAQTQSRQPGIESEMNPS. 46–70 contributes to the NAD(+) binding site; sequence LITGGDSGIGRAVSVAYAKEGADIA. Residue Ser-178 coordinates substrate. Residue Tyr-191 is the Proton acceptor of the active site.

The protein belongs to the short-chain dehydrogenases/reductases (SDR) family.

This is General stress protein 39 (ydaD) from Bacillus subtilis (strain 168).